Reading from the N-terminus, the 255-residue chain is Uridylate kinase (255 aa).

ATP is bound at residue 22–25 (KLSG). The involved in allosteric activation by GTP stretch occupies residues 30 to 35 (GNGGYG). Residue G64 participates in UMP binding. Positions 65 and 69 each coordinate ATP. UMP is bound by residues D85 and 146–153 (TGNPFFTT). Positions 174, 180, and 183 each coordinate ATP.

This sequence belongs to the UMP kinase family. Homohexamer.

Its subcellular location is the cytoplasm. It carries out the reaction UMP + ATP = UDP + ADP. It functions in the pathway pyrimidine metabolism; CTP biosynthesis via de novo pathway; UDP from UMP (UMPK route): step 1/1. Allosterically activated by GTP. Inhibited by UTP. Functionally, catalyzes the reversible phosphorylation of UMP to UDP. The polypeptide is Uridylate kinase (Rubrobacter xylanophilus (strain DSM 9941 / JCM 11954 / NBRC 16129 / PRD-1)).